The chain runs to 653 residues: Serine/threonine-protein phosphatase with EF-hands 1 (653 aa).

The IQ domain maps to 16-45; that stretch reads SLRAALIIQNWYRGYKARLKARQHYALTIF. The tract at residues 121-455 is catalytic; it reads IDLLLEAFKE…PRFFQYQVTK (335 aa). The Mn(2+) site is built by Asp172, His174, Asp201, and Asn233. His234 acts as the Proton donor in catalysis. The Mn(2+) site is built by His285 and His403. 3 EF-hand domains span residues 483–518, 566–601, and 606–641; these read SRKSDLTRAFQLQDHRKSGKLSVSQWAFCMENILGL, RYRSDLEIIFNAIDTDHSGLISVEEFRAMWKLFSSH, and IDDSQVNKLANIMDLNKDGSIDFNEFLKAFYVVHRY. Residues Asp579, Asp581, Ser583, Glu590, Asp619, Asn621, Asp623, Ser625, and Glu630 each contribute to the Ca(2+) site.

It belongs to the PPP phosphatase family. Mn(2+) serves as cofactor. It depends on Mg(2+) as a cofactor. Detected in retina and retinal derived Y-79 retinoblastoma cells. Also found in fetal brain.

The catalysed reaction is O-phospho-L-seryl-[protein] + H2O = L-seryl-[protein] + phosphate. It catalyses the reaction O-phospho-L-threonyl-[protein] + H2O = L-threonyl-[protein] + phosphate. With respect to regulation, activated by calcium. May have a role in the recovery or adaptation response of photoreceptors. May have a role in development. The polypeptide is Serine/threonine-protein phosphatase with EF-hands 1 (PPEF1) (Homo sapiens (Human)).